The following is a 338-amino-acid chain: CDP-paratose 2-epimerase (338 aa).

Position 124 (Thr-124) interacts with substrate. Residue Tyr-164 is the Proton acceptor of the active site.

It belongs to the NAD(P)-dependent epimerase/dehydratase family. Homotetramer. NAD(+) serves as cofactor.

It catalyses the reaction CDP-alpha-D-paratose = CDP-3,6-dideoxy-alpha-D-mannose. The protein operates within nucleotide-sugar biosynthesis; CDP-3,6-dideoxy-D-mannose biosynthesis; CDP-3,6-dideoxy-D-mannose from CTP and alpha-D-glucose 1-phosphate: step 5/5. Functionally, catalyzes the isomeration of CDP-paratose to CDP-tyvelose. This Salmonella typhi protein is CDP-paratose 2-epimerase (rfbE).